Reading from the N-terminus, the 193-residue chain is MLIGYVRVSTNDQNTDLQRNALVCAGCEQIFEDKLSGTRTDRPGLKRALKRLQKGDTLVVWKLDRLGRSMKHLISLVGELRERGINFRSLTDSIDTSSPMGRFFFHVMGALAEMERELIIERTMAGLAAARNKGRIGGRPPKLTKAEWEQAGRLLAQGIPRKQVALIYDVALSTLYKKHPAKRAHIENDDRIN.

Residues 1–134 (MLIGYVRVST…AGLAAARNKG (134 aa)) enclose the Resolvase/invertase-type recombinase catalytic domain. Ser9 serves as the catalytic O-(5'-phospho-DNA)-serine intermediate. Positions 138 to 183 (GRPPKLTKAEWEQAGRLLAQGIPRKQVALIYDVALSTLYKKHPAKR) form a DNA-binding region, H-T-H motif.

Belongs to the site-specific recombinase resolvase family. In terms of assembly, homodimer. During inversion, two dimers associate to form a homotetramer.

Its subcellular location is the host cytoplasm. Its function is as follows. Performs inversion of a viral 3 kp segment (G-segment) that encodes two alternate pairs of tail fiber proteins thereby modifying the host specificity of the virus. Binds as a dimer to the viral gix sites which are 34-bp palindromic sequences that flank the invertible G-segment. Catalyzes site-specific recombination in the presence of the host factor Fis. Gin dimers bound to each of the gix sites and host factor Fis bound to the enhancer come together to form the synaptic complex. Each Gin monomer introduces a nick and becomes covalently attached to the 5'-phosphate of the DNA, resulting in double-stranded staggered breaks at both recombination sites. A 180 degrees rotation of one of the two Gin dimers followed by religation of the DNA leads to the inversion of the G-segment (G+ or G- orientation). The protein is Serine recombinase gin (gin) of Escherichia phage Mu (Bacteriophage Mu).